The chain runs to 283 residues: 2-dehydro-3-deoxyphosphooctonate aldolase (283 aa).

The protein belongs to the KdsA family.

The protein resides in the cytoplasm. It catalyses the reaction D-arabinose 5-phosphate + phosphoenolpyruvate + H2O = 3-deoxy-alpha-D-manno-2-octulosonate-8-phosphate + phosphate. It participates in carbohydrate biosynthesis; 3-deoxy-D-manno-octulosonate biosynthesis; 3-deoxy-D-manno-octulosonate from D-ribulose 5-phosphate: step 2/3. It functions in the pathway bacterial outer membrane biogenesis; lipopolysaccharide biosynthesis. The chain is 2-dehydro-3-deoxyphosphooctonate aldolase from Vibrio parahaemolyticus serotype O3:K6 (strain RIMD 2210633).